The following is a 520-amino-acid chain: Cytochrome P450 315a1, mitochondrial (520 aa).

Cysteine 466 is a binding site for heme.

It belongs to the cytochrome P450 family. It depends on heme as a cofactor. As to expression, complex coexpression pattern of dib (disembodied) and sad (shade) in the early embryo that restricts to the prothoracic gland cells of the developing ring gland during late embryogenesis. In larvae and adult, coexpression is seen in prothoracic gland and follicle cells of the ovary. In adults, coexpression is seen in the follicle cells, sad only is expressed in nurse cells.

The protein localises to the mitochondrion membrane. The catalysed reaction is 2-deoxyecdysone + 2 reduced [adrenodoxin] + O2 + 2 H(+) = ecdysone + 2 oxidized [adrenodoxin] + H2O. It carries out the reaction 2,22-dideoxyecdysone + 2 reduced [adrenodoxin] + O2 + 2 H(+) = 22-deoxyecdysone + 2 oxidized [adrenodoxin] + H2O. The protein operates within steroid biosynthesis; ecdysteroid biosynthesis. In terms of biological role, required for CNS development: midline glial cells. Involved in the metabolism of insect hormones: responsible for ecdysteroid C2-hydroxylase activity. May be involved in the breakdown of synthetic insecticides. The sequence is that of Cytochrome P450 315a1, mitochondrial from Drosophila melanogaster (Fruit fly).